We begin with the raw amino-acid sequence, 385 residues long: Phospho-N-acetylmuramoyl-pentapeptide-transferase (385 aa).

The next 10 helical transmembrane spans lie at 23-43, 79-99, 103-123, 135-155, 186-206, 218-238, 258-278, 282-302, 307-327, and 362-382; these read FITVRAALASITALGIALGAG, MGGIIILLSVGGATLLWGAVA, VWLSLVAMGGLGVVGFADDYV, AWYKVAGQVAVGLFVGSVLYF, LGVDLGWLVYLPVVVFIVTAV, GLTTGVTAFVSLGLVALVYVS, LTVFVAAVTAACFGFLWYNGY, VFMGDTGALALGGAVGSTILM, LLLPLLGIVYFAEALSVIVQT, and KIVTRFWIVTAITVIAALLIL.

The protein belongs to the glycosyltransferase 4 family. MraY subfamily. Mg(2+) serves as cofactor.

It is found in the cell inner membrane. The catalysed reaction is UDP-N-acetyl-alpha-D-muramoyl-L-alanyl-gamma-D-glutamyl-meso-2,6-diaminopimeloyl-D-alanyl-D-alanine + di-trans,octa-cis-undecaprenyl phosphate = di-trans,octa-cis-undecaprenyl diphospho-N-acetyl-alpha-D-muramoyl-L-alanyl-D-glutamyl-meso-2,6-diaminopimeloyl-D-alanyl-D-alanine + UMP. It participates in cell wall biogenesis; peptidoglycan biosynthesis. In terms of biological role, catalyzes the initial step of the lipid cycle reactions in the biosynthesis of the cell wall peptidoglycan: transfers peptidoglycan precursor phospho-MurNAc-pentapeptide from UDP-MurNAc-pentapeptide onto the lipid carrier undecaprenyl phosphate, yielding undecaprenyl-pyrophosphoryl-MurNAc-pentapeptide, known as lipid I. This Salinibacter ruber (strain DSM 13855 / M31) protein is Phospho-N-acetylmuramoyl-pentapeptide-transferase.